A 227-amino-acid chain; its full sequence is UPF0173 metal-dependent hydrolase BCB4264_A4722 (227 aa).

It belongs to the UPF0173 family.

The sequence is that of UPF0173 metal-dependent hydrolase BCB4264_A4722 from Bacillus cereus (strain B4264).